A 722-amino-acid polypeptide reads, in one-letter code: Threonine--tRNA ligase 1, cytoplasmic (722 aa).

Positions 1 to 10 (MSQEKASSPS) are enriched in polar residues. The interval 1 to 48 (MSQEKASSPSGKMDGEKPVDASEEKRKEGGKKKSKDGGGDGGRAELNP) is disordered. Positions 13-27 (MDGEKPVDASEEKRK) are enriched in basic and acidic residues. Residues 78 to 142 (DSKPIKVTLP…ETDCTLELLK (65 aa)) enclose the TGS domain. N6-acetyllysine is present on Lys-242. Thr-245 is modified (phosphothreonine). The residue at position 297 (Tyr-297) is a Phosphotyrosine. Thr-452 is subject to Phosphothreonine.

This sequence belongs to the class-II aminoacyl-tRNA synthetase family. Homodimer. Post-translationally, ISGylated.

The protein resides in the cytoplasm. The catalysed reaction is tRNA(Thr) + L-threonine + ATP = L-threonyl-tRNA(Thr) + AMP + diphosphate + H(+). In terms of biological role, catalyzes the attachment of threonine to tRNA(Thr) in a two-step reaction: threonine is first activated by ATP to form Thr-AMP and then transferred to the acceptor end of tRNA(Thr). Also edits incorrectly charged tRNA(Thr) via its editing domain, at the post-transfer stage. The protein is Threonine--tRNA ligase 1, cytoplasmic (Tars1) of Mus musculus (Mouse).